The following is a 223-amino-acid chain: Small ribosomal subunit protein uS5 (223 aa).

The span at 1–15 (MTEAVAAEATETAPA) shows a compositional bias: low complexity. The tract at residues 1 to 51 (MTEAVAAEATETAPATDDRRGGRRGERGDRGQGRGDRGGRGGRDGGREAEK) is disordered. Residues 16 to 51 (TDDRRGGRRGERGDRGQGRGDRGGRGGRDGGREAEK) are compositionally biased toward basic and acidic residues. The region spanning 54 to 117 (FVERVVTINR…EEAKKSFFRV (64 aa)) is the S5 DRBM domain.

This sequence belongs to the universal ribosomal protein uS5 family. As to quaternary structure, part of the 30S ribosomal subunit. Contacts proteins S4 and S8.

With S4 and S12 plays an important role in translational accuracy. Functionally, located at the back of the 30S subunit body where it stabilizes the conformation of the head with respect to the body. In Paenarthrobacter aurescens (strain TC1), this protein is Small ribosomal subunit protein uS5.